A 320-amino-acid chain; its full sequence is MLLFTAVISVPMLLLAVSVLMSVIYDSMFKPMNHGMPFHRSFAYPAMIVVFLISLLLLAFLFSKSIHSLLHKINLLNQTIRHLASDQRVPDKIEVKRADEIGELIKSVNLLIERTTYRELELRQQEEIKKELLQKLRHDINTPLTALRLQLFYLEDQCHGQAVFESLYQQIEYISELTNEFNLYSAETLESSYIVNEEVRLNELLETAVKKWDYLYSMSGIELHYKPADQDVIWMSNTLWMERLFDNIFQNTLRHSKAKKMEVTIEHGDVFIRDDGIGFDRNESSEGLGLKIIEDTCRLLAITYELHTNDNGTGFLFSKE.

The chain crosses the membrane as a helical span at residues 1–21 (MLLFTAVISVPMLLLAVSVLM). Residues 22-41 (SVIYDSMFKPMNHGMPFHRS) lie on the Extracellular side of the membrane. The chain crosses the membrane as a helical span at residues 42-62 (FAYPAMIVVFLISLLLLAFLF). At 63-320 (SKSIHSLLHK…NGTGFLFSKE (258 aa)) the chain is on the cytoplasmic side. In terms of domain architecture, HAMP spans 67–120 (HSLLHKINLLNQTIRHLASDQRVPDKIEVKRADEIGELIKSVNLLIERTTYREL). A Histidine kinase domain is found at 135–320 (KLRHDINTPL…NGTGFLFSKE (186 aa)). Position 138 is a phosphohistidine; by autocatalysis (His138).

It localises to the cell membrane. The catalysed reaction is ATP + protein L-histidine = ADP + protein N-phospho-L-histidine.. Its function is as follows. Member of the two-component regulatory system YbdK/YbdJ. Probably activates YbdJ by phosphorylation. The sequence is that of Sensor histidine kinase YbdK (ybdK) from Bacillus subtilis (strain 168).